The following is a 186-amino-acid chain: uncharacterized protein (186 aa).

It to M.jannaschii MJ0208.

This is an uncharacterized protein from Methanocaldococcus jannaschii (strain ATCC 43067 / DSM 2661 / JAL-1 / JCM 10045 / NBRC 100440) (Methanococcus jannaschii).